Reading from the N-terminus, the 496-residue chain is MSEEHVHLDESEVYHIRKQKLAELRTGGFNFPNTFRREHLADALLKQYSETEKQTLEQKHVKVSVAGRIVLRRIMGKASFFHIQDVSGRIQVYLRSNDLPDIYEQFKHWDLGDIVGVQGELFKTNTGELTINAEHVELLTKSLRPLPDKFHGLADQELKYRKRYVDLIANEDSRKTFLIRSHLIKAFREFMDDNHFLEVETPMMHPIPGGALARPFVTHHNTLDMTMYLRIAPELYLKRLVVGGFERVYEINRNFRNEGISTRHNPEFTMLEFYQAYADYNDLMNFTEQLFHYLCDKVLATRQIEYQGQVIDFNKPFERLSVKEAILKYHPDIKAQQLETVEGCRTLLNDLGLPYKETDGLGKLQIILFEETVEHQLFQPTFITEYPTEISPLARRSDTNPEVTDRFEFFIAGREIANGFSELNDAEDQAERFRKQVEEKDAGDLEAMHFDSDYIEALEYGLPPTAGEGIGIDRLVMLFTNSQSIRDVILFPHLRQ.

Mg(2+) is bound by residues Glu-408 and Glu-415.

Belongs to the class-II aminoacyl-tRNA synthetase family. Homodimer. Mg(2+) is required as a cofactor.

The protein resides in the cytoplasm. It catalyses the reaction tRNA(Lys) + L-lysine + ATP = L-lysyl-tRNA(Lys) + AMP + diphosphate. The sequence is that of Lysine--tRNA ligase from Legionella pneumophila (strain Corby).